A 731-amino-acid polypeptide reads, in one-letter code: T-cell activation Rho GTPase-activating protein (731 aa).

Residues Q88–F277 form the Rho-GAP domain. Disordered stretches follow at residues T288–P421, S464–H507, and H641–P662. A compositionally biased stretch (polar residues) spans S299–D311. Residues S319–S329 show a composition bias toward low complexity. Over residues S380–K399 the composition is skewed to polar residues. A Phosphoserine modification is found at S400. A compositionally biased stretch (low complexity) spans S464–P480. Composition is skewed to basic and acidic residues over residues K494–E503 and H641–K652.

Functionally, may function as a GTPase-activating protein and may play important roles during T-cell activation. This chain is T-cell activation Rho GTPase-activating protein (TAGAP), found in Homo sapiens (Human).